Reading from the N-terminus, the 325-residue chain is Protein UL76 (325 aa).

The segment at 222–286 (ARASAVAGGR…VRGGGAVEPA (65 aa)) is disordered. Low complexity predominate over residues 247–258 (GPGAQTVSASGA).

It belongs to the herpesviridae UL24 family.

Its subcellular location is the virion. The protein resides in the host cytoplasm. It is found in the host nucleus. It localises to the host nucleolus. The protein localises to the host Golgi apparatus. Functionally, may participate in nuclear egress of viral particles. Plays a role in the dispersal of several host nucleolar proteins including NCL/nucleolin and NPM1. Since deletion of host NCL/nucleolin negatively impact on nuclear egress, UL76 supposedly acts on this process through its effect on host nucleoli. Induces cell cycle arrest in host cells at the G2/M phase following by apoptosis. The mechanism involves the inhibition of host mitotic complex cyclinB/CDK1. This Human cytomegalovirus (strain Merlin) (HHV-5) protein is Protein UL76 (UL76).